The sequence spans 821 residues: PX domain-containing protein C1450.12 (821 aa).

The PX domain occupies 171 to 310 (AYVLGVRQST…SFLTDDPVTL (140 aa)). The tract at residues 235–271 (KDDHDTYLNSSEDSTLSPLPSRSSDTNDPQSDSQHVL) is disordered. Over residues 241–268 (YLNSSEDSTLSPLPSRSSDTNDPQSDSQ) the composition is skewed to polar residues. Phosphothreonine is present on residues Thr-260 and Thr-597. 2 stretches are compositionally biased toward acidic residues: residues 737–746 (GDEDDQDEND) and 754–766 (EHME…EEFD). The disordered stretch occupies residues 737 to 766 (GDEDDQDENDQVTKVEEEHMEDDDSVEEFD). A Phosphoserine modification is found at Ser-761.

The protein localises to the mitochondrion membrane. This Schizosaccharomyces pombe (strain 972 / ATCC 24843) (Fission yeast) protein is PX domain-containing protein C1450.12.